The primary structure comprises 123 residues: 1,4-dihydroxy-2-naphthoyl-CoA hydrolase (123 aa).

The Nucleophile or proton acceptor role is filled by E46.

The protein belongs to the thioesterase PaaI family.

It catalyses the reaction 1,4-dihydroxy-2-naphthoyl-CoA + H2O = 1,4-dihydroxy-2-naphthoate + CoA + H(+). Its pathway is quinol/quinone metabolism; menaquinone biosynthesis. In terms of biological role, catalyzes the hydrolysis of 1,4-dihydroxy-2-naphthoyl-CoA (DHNA-CoA) to 1,4-dihydroxy-2-naphthoate (DHNA) and free coenzyme A. Production of DHNA is required for protection against bacteriolysis in the cytosol of macrophages and tissue-specific virulence in vivo, suggesting that MenI is required to protect the bacteria from killing in the macrophage cytosol. This chain is 1,4-dihydroxy-2-naphthoyl-CoA hydrolase, found in Listeria monocytogenes serotype 1/2a (strain 10403S).